Reading from the N-terminus, the 552-residue chain is Urocanate hydratase (552 aa).

NAD(+) contacts are provided by residues 49 to 50, glutamine 127, 173 to 175, aspartate 193, 239 to 240, 260 to 264, 270 to 271, and tyrosine 319; these read GG, GMG, NA, QTSAH, and YI. The active site involves cysteine 407. Glycine 489 contributes to the NAD(+) binding site.

It belongs to the urocanase family. The cofactor is NAD(+).

The protein resides in the cytoplasm. The catalysed reaction is 4-imidazolone-5-propanoate = trans-urocanate + H2O. It participates in amino-acid degradation; L-histidine degradation into L-glutamate; N-formimidoyl-L-glutamate from L-histidine: step 2/3. Functionally, catalyzes the conversion of urocanate to 4-imidazolone-5-propionate. The protein is Urocanate hydratase of Bacillus anthracis (strain CDC 684 / NRRL 3495).